The following is a 234-amino-acid chain: MGEENEQRIGERVYEFLRREGKDEQKMRVTIPEVLNCQYGMYVWPCAVVLAQYLWYHRKNLADKRVLEVGAGVSLPGILAAKCGAKVILSDSAEMPQCLENCRRSCKMNNIVGVPVIGLTWGEVSPDLLDLPPIDIILGSDVFYEPKDFEDILLTVRFLMERMPQAEFWTTYQVRSADWSVEALLCKWNLKCTNVPLKTFDADNECLAGSELPGRHTVQMMIITLDRKGAGHTG.

Belongs to the methyltransferase superfamily. METTL23 family.

It is found in the nucleus. The protein localises to the cytoplasm. It catalyses the reaction L-arginyl-[protein] + 2 S-adenosyl-L-methionine = N(omega),N(omega)-dimethyl-L-arginyl-[protein] + 2 S-adenosyl-L-homocysteine + 2 H(+). Its function is as follows. Histone methyltransferase that dimethylates histone H3 at 'Arg-17', forming asymmetric dimethylarginine (H3R17me2a), leading to activate transcription via chromatin remodeling. The sequence is that of Histone-arginine methyltransferase METTL23 (mettl23) from Xenopus laevis (African clawed frog).